The sequence spans 519 residues: Ion-translocating oxidoreductase complex subunit C (519 aa).

4Fe-4S ferredoxin-type domains lie at 372–401 (ETPE…FELN) and 411–440 (GAAK…VQSF). [4Fe-4S] cluster-binding residues include Cys381, Cys384, Cys387, Cys391, Cys420, Cys423, Cys426, and Cys430. Residues 494–519 (KAEEAAAAAAMPPPATATAIQGEATP) are disordered.

Belongs to the 4Fe4S bacterial-type ferredoxin family. RnfC subfamily. In terms of assembly, the complex is composed of six subunits: RnfA, RnfB, RnfC, RnfD, RnfE and RnfG. [4Fe-4S] cluster serves as cofactor.

It localises to the cellular chromatophore membrane. Part of a membrane-bound complex that couples electron transfer with translocation of ions across the membrane. Required for nitrogen fixation. Involved in electron transfer to nitrogenase. The chain is Ion-translocating oxidoreductase complex subunit C from Rhodobacter capsulatus (Rhodopseudomonas capsulata).